The chain runs to 599 residues: Retrotransposon Gag-like protein 5 (599 aa).

3 disordered regions span residues 77–97 (DPTPEEEEEEEEEVPFLCWPP), 116–139 (DYTNPDGSSDPPLSPSPSQPELHS), and 377–450 (FPQE…EEDE). Over residues 78 to 90 (PTPEEEEEEEEEV) the composition is skewed to acidic residues. Acidic residues-rich tracts occupy residues 393 to 432 (DEMEDEEDEDEDEDYEFEEEDEDDDDEEEEEEEEEEEDKE) and 439 to 450 (DSDENKYEEEDE).

In Mus musculus (Mouse), this protein is Retrotransposon Gag-like protein 5.